Here is a 912-residue protein sequence, read N- to C-terminus: Androgen receptor (912 aa).

Positions 1–550 (MEVQLGLGRV…PIDYYFPPQK (550 aa)) are modulating. An interaction with ZNF318 region spans residues 1 to 579 (MEVQLGLGRV…GSCKVFFKRA (579 aa)). Disordered stretches follow at residues 35-156 (QNPG…GPTF) and 204-236 (QQQQEVVSEGGSSGRAREAAGAPTSSKDSYLGG). S69 is modified (phosphoserine; by CDK9). A Phosphoserine modification is found at S82. A compositionally biased stretch (low complexity) spans 204 to 213 (QQQQEVVSEG). A compositionally biased stretch (polar residues) spans 226–236 (PTSSKDSYLGG). Phosphotyrosine; by CSK is present on Y233. S266 bears the Phosphoserine mark. A Phosphotyrosine; by CSK and TNK2 modification is found at Y277. A phosphotyrosine; by CSK mark is found at Y315, Y354, Y365, and Y370. At Y371 the chain carries Phosphotyrosine; by CSK and TNK2. Positions 375–394 (LSLAGPPPPPPSPHPHARIK) are disordered. Pro residues predominate over residues 379–388 (GPPPPPPSPH). K394 participates in a covalent cross-link: Glycyl lysine isopeptide (Lys-Gly) (interchain with G-Cter in SUMO). Y401 carries the post-translational modification Phosphotyrosine; by CSK. Residues 452–490 (LYGPCGGSGGGGTGESVSVTPYGYTRPQQGLTGQEGDFP) form a disordered region. The segment covering 455–465 (PCGGSGGGGTG) has biased composition (gly residues). K513 participates in a covalent cross-link: Glycyl lysine isopeptide (Lys-Gly) (interchain with G-Cter in SUMO). Y527 and Y544 each carry phosphotyrosine; by CSK. The interaction with LPXN stretch occupies residues 544–911 (YYFPPQKTCL…GKVKPIYFHT (368 aa)). Positions 551–624 (TCLICGDEAS…AGMTLGARRL (74 aa)) form a DNA-binding region, nuclear receptor. 2 NR C4-type zinc fingers span residues 552 to 572 (CLICGDEASGCHYGALTCGSC) and 588 to 612 (CASRNDCTIDKFRRKNCPPCRLRKC). Residues 564-654 (YGALTCGSCK…TEETTQKLTV (91 aa)) form an interaction with HIPK3 region. The interval 584 to 911 (QKYLCASRND…GKVKPIYFHT (328 aa)) is interaction with CCAR1. The segment at 617–911 (MTLGARRLKK…GKVKPIYFHT (295 aa)) is interaction with KAT7. Phosphoserine; by STK4/MST1 is present on S643. Residues 661–892 (ECQPIFLNVL…DFPEMMAEII (232 aa)) form the NR LBD domain. 17beta-hydroxy-5alpha-androstan-3-one-binding residues include N698 and R745. Residues K838 and K840 each participate in a glycyl lysine isopeptide (Lys-Gly) (interchain with G-Cter in ubiquitin) cross-link. Position 870 (T870) interacts with 17beta-hydroxy-5alpha-androstan-3-one. Y908 is modified (phosphotyrosine; by CSK).

Belongs to the nuclear hormone receptor family. NR3 subfamily. In terms of assembly, binds DNA as a homodimer. Part of a ternary complex containing AR, EFCAB6/DJBP and PARK7. Interacts with HIPK3 and NR0B2 in the presence of androgen. The ligand binding domain interacts with KAT7/HBO1 in the presence of dihydrotestosterone. Interacts with EFCAB6/DJBP, PQBP1, RANBP9, RBAK, SPDEF, SRA1, TGFB1I1 and RREB1. Interacts with ZMIZ1/ZIMP10 and ZMIZ2/ZMIP7 which both enhance its transactivation activity. Interacts with SLC30A9 and RAD54L2/ARIP4. Interacts with MACROD1 (via macro domain). Interacts via the ligand-binding domain with LXXLL and FXXLF motifs from NCOA1, NCOA2, NCOA3 and MAGEA11. Interacts (via nuclear receptor DNA binding domain and nuclear receptor ligand binding domain) with NCOA4. The AR N-terminal poly-Gln region binds Ran resulting in enhancement of AR-mediated transactivation. Ran-binding decreases as the poly-Gln length increases. Interacts with HIP1 (via coiled coil domain). Interacts (via ligand-binding domain) with TRIM68. Interacts with TNK2. Interacts with USP26. Interacts with RNF6. Interacts (regulated by RNF6 probably through polyubiquitination) with RNF14; regulates AR transcriptional activity. Interacts with PRMT2 and TRIM24. Interacts with RACK1. Interacts with RANBP10; this interaction enhances dihydrotestosterone-induced AR transcriptional activity. Interacts with PRPF6 in a hormone-independent way; this interaction enhances dihydrotestosterone-induced AR transcriptional activity. Interacts with STK4/MST1. Interacts with ZIPK/DAPK3. Interacts with LPXN. Interacts with MAK. Part of a complex containing AR, MAK and NCOA3. Interacts with CRY1. Interacts with CCAR1 and GATA2. Interacts with ZNF318. Interacts with BUD31. Interacts with ARID4A. Interacts with ARID4B. Interacts (via NR LBD domain) with ZBTB7A; the interaction is direct and androgen-dependent. Interacts with NCOR1. Interacts with NCOR2. Interacts with CRY2 in a ligand-dependent manner. Phosphorylation by TNK2 enhances the DNA-binding and transcriptional activity. Phosphorylation at Ser-69 by CDK9 regulates AR promoter selectivity and cell growth. In terms of processing, sumoylated on Lys-394 (major) and Lys-513. Ubiquitinated. Deubiquitinated by USP26. 'Lys-6' and 'Lys-27'-linked polyubiquitination by RNF6 modulates AR transcriptional activity and specificity. Post-translationally, palmitoylated by ZDHHC7 and ZDHHC21. Palmitoylation is required for plasma membrane targeting and for rapid intracellular signaling via ERK and AKT kinases and cAMP generation.

It is found in the nucleus. The protein resides in the cytoplasm. Its function is as follows. Steroid hormone receptors are ligand-activated transcription factors that regulate eukaryotic gene expression and affect cellular proliferation and differentiation in target tissues. Transcription factor activity is modulated by bound coactivator and corepressor proteins like ZBTB7A that recruits NCOR1 and NCOR2 to the androgen response elements/ARE on target genes, negatively regulating androgen receptor signaling and androgen-induced cell proliferation. Transcription activation is also down-regulated by NR0B2. Activated, but not phosphorylated, by HIPK3 and ZIPK/DAPK3. In Crocuta crocuta (Spotted hyena), this protein is Androgen receptor (AR).